The following is a 160-amino-acid chain: MVPKLFTSQICLLLLLGLMGVEGSLHARPPQFTKAQWFAIQHINVNPPRCTIAMRVINNYQRRCKNQNTFLRTTFAYTANVCRNERIRCPRNRTLHNCHRSRYRVPLLHCDLINPGAQNISTCRYADRPGRRFYVVACESRDPRDSPRYPVVPVHLDTTI.

The signal sequence occupies residues 1–27; it reads MVPKLFTSQICLLLLLGLMGVEGSLHA. A required for nearly all of the bactericidal activities; partially involved in LPS-binding region spans residues 28-72; it reads RPPQFTKAQWFAIQHINVNPPRCTIAMRVINNYQRRCKNQNTFLR. His-42 acts as the Proton acceptor in catalysis. Intrachain disulfides connect Cys-50–Cys-110, Cys-64–Cys-123, Cys-82–Cys-138, and Cys-89–Cys-98. Tyr-60 is modified (3'-nitrotyrosine). 65–69 is a binding site for substrate; that stretch reads KNQNT. Residues Asn-92 and Asn-119 are each glycosylated (N-linked (GlcNAc...) asparagine). The active-site Proton donor is the His-155.

It belongs to the pancreatic ribonuclease family. As to quaternary structure, interacts with bacterial lipopolysaccharide (LPS) and lipoteichoic acid (LTA). In vitro interacts with phospholipid bilayers.

Its subcellular location is the secreted. Functionally, cytotoxin and helminthotoxin with low-efficiency ribonuclease activity. Possesses a wide variety of biological activities. Exhibits antibacterial activity. In Macaca fascicularis (Crab-eating macaque), this protein is Eosinophil cationic protein (RNASE3).